Consider the following 1196-residue polypeptide: DNA-directed RNA polymerase subunit 2 (1196 aa).

Positions S1074 to G1095 are disordered. Residues C1133 to C1154 form a C4-type zinc finger.

The protein belongs to the RNA polymerase beta chain family.

It localises to the virion. The enzyme catalyses RNA(n) + a ribonucleoside 5'-triphosphate = RNA(n+1) + diphosphate. Its function is as follows. DNA-dependent RNA polymerase catalyzes the transcription of DNA into RNA using the four ribonucleoside triphosphates as substrates. The protein is DNA-directed RNA polymerase subunit 2 (RPO2) of Acanthamoeba polyphaga mimivirus (APMV).